A 208-amino-acid chain; its full sequence is Peptidyl-prolyl cis-trans isomerase FKBP13, chloroplastic (208 aa).

2 disulfide bridges follow: C84–C96 and C185–C190. In terms of domain architecture, PPIase FKBP-type spans 109-208 (GQLIKAHYVG…LFDIEYIGKA (100 aa)).

It belongs to the FKBP-type PPIase family. Interacts in vitro with LTO1. The precursor, but not the mature form of the protein, interacts with the Rieske protein. In terms of tissue distribution, expressed in stems, leaves and developing flower buds, but not in roots.

It is found in the plastid. The protein localises to the chloroplast thylakoid lumen. It carries out the reaction [protein]-peptidylproline (omega=180) = [protein]-peptidylproline (omega=0). With respect to regulation, PPIase activity is optimal in oxidized form (S-S) and minimal in reduced form (SH). Reduction of the oxidized form is mediated by thioredoxin (TRX-M). In terms of biological role, PPIases accelerate the folding of proteins. It catalyzes the cis-trans isomerization of proline imidic peptide bonds in oligopeptides. Responsive of the major PPIase activity in the chloroplast thylakoid lumen. Regulates the accumulation of Rieske protein, an essential component of the photosynthetic electron transport chain. The sequence is that of Peptidyl-prolyl cis-trans isomerase FKBP13, chloroplastic from Arabidopsis thaliana (Mouse-ear cress).